A 275-amino-acid polypeptide reads, in one-letter code: T cell receptor alpha chain MC.7.G5 (275 aa).

The first 21 residues, 1 to 21 (MACPGFLWALVISTCLEFSMA), serve as a signal peptide directing secretion. The Ig-like V-type domain maps to 22-116 (QTVTQSQPEM…AAMYFCAYRS (95 aa)). The t cell receptor alpha variable 38-2DV8 stretch occupies residues 22 to 116 (QTVTQSQPEM…AAMYFCAYRS (95 aa)). A disulfide bridge links C43 with C112. The tract at residues 47-53 (TSESDYY) is CDR1. The interval 71–81 (QEAYKQQNATE) is CDR2. N78 carries an N-linked (GlcNAc...) asparagine glycan. The CDR3 stretch occupies residues 112 to 124 (CAYRSAVNARLMF). Residues 119–134 (NARLMFGDGTQLVVKP) are t cell receptor alpha joining 31. Residues 136 to 275 (IQNPDPAVYQ…LLMTLRLWSS (140 aa)) are t cell receptor alpha constant. Residues 154–242 (KSVCLFTDFD…LVEKSFETDT (89 aa)) form the Ig-like C1-type domain. C157 and C207 are joined by a disulfide. 4 N-linked (GlcNAc...) asparagine glycosylation sites follow: N167, N201, N212, and N248. Positions 229–250 (CDVKLVEKSFETDTNLNFQNLS) are connecting peptide. A helical transmembrane segment spans residues 251-273 (VIGFRILLLKVAGFNLLMTLRLW). At 274 to 275 (SS) the chain is on the cytoplasmic side.

As to quaternary structure, disulfide-linked heterodimer with TRBV25-1*01J2S3*01C2*01 beta chain. The alpha-beta TR associates with the transmembrane signaling CD3 coreceptor proteins to form the TR-CD3 (TCR). The assembly of alpha-beta TR heterodimers with CD3 occurs in the endoplasmic reticulum where a single alpha-beta TR heterodimer associates with one CD3D-CD3E heterodimer, one CD3G-CD3E heterodimer and one CD247 homodimer forming a stable octameric structure. CD3D-CD3E and CD3G-CD3E heterodimers preferentially associate with TR alpha and TR beta chains (via TM domain), respectively. The association of the CD247 homodimer is the last step of TCR assembly in the endoplasmic reticulum and is required for transport to the cell surface. In terms of tissue distribution, expressed in MR1-restricted CD8-positive T cells.

The protein resides in the cell membrane. Its function is as follows. The alpha chain of TRAV38-2DV8*01J31*01C*01/TRBV25-1*01J2S3*01C2*01 alpha-beta T cell receptor (TR) clonotype that displays pan-cancer cell recognition via the invariant MR1 molecule. On CD8-positive T cell clone MC.7.G5, likely recognizes tumor-specific or -associated metabolite(s) essential for cancer cell survival, triggering killing of many cancer cell types including lung, melanoma, leukemia, colon, breast, prostate, bone and ovarian cancer cells. Mediates cancer cell cytotoxicity in an HLA-independent manner. Has no reactivity to healthy cells, even stressed or infected by bacteria. Antigen recognition initiates TR-CD3 clustering on the cell surface and intracellular activation of LCK that phosphorylates the ITAM motifs of CD3G, CD3D, CD3E and CD247 enabling the recruitment of ZAP70. In turn, ZAP70 phosphorylates LAT, which recruits numerous signaling molecules to form the LAT signalosome. The LAT signalosome propagates signal branching to three major signaling pathways, the calcium, the mitogen-activated protein kinase (MAPK) kinase and the nuclear factor NF-kappa-B (NF-kB) pathways, leading to the mobilization of transcription factors that are critical for gene expression and essential for T cell differentiation into effector/memory T cells. The polypeptide is T cell receptor alpha chain MC.7.G5 (Homo sapiens (Human)).